Consider the following 445-residue polypeptide: MKNNKIYIKTWGCQMNEYDSALITQILKQKHGYENTKDPKLANVLILNTCSIREKAQEKVFHQLGRWKKLKQKNPNLIIAVGGCVATQEGKNIYKRANYVDIIFGTQTLHYLPNMIQEVKKNKKSVTNIDFPLTEKFNFIEYPRKPKVTAFVSIMEGCNKFCSFCIVPYTRGHEISRPVDDILLEISTLSSRGVKEIHLLGQNVNSYKGKTFNGDICKFSNLLRLVASIDGIDRIRFTTSNPFEFTDDIIEIYAEIPKIVSFLHLPVQSGSNRILQLMKRMHTIDEYKTIINKILKLRPNIQISSDFIIGFPGETLIDFEQTLQLIKDLNIDMSYSFIYSPRPGTPASELQDNVTLCEKQKRLHILQTLIRNNTTMWNQKMLGSIQSVLVEGRSQKNPKELFGRTENNRIVNFKGNQNMIGEFINLKITKINPNSLRGSYEKRNN.

An MTTase N-terminal domain is found at 4–121 (NKIYIKTWGC…LPNMIQEVKK (118 aa)). 6 residues coordinate [4Fe-4S] cluster: cysteine 13, cysteine 50, cysteine 84, cysteine 158, cysteine 162, and cysteine 165. Residues 144–376 (RKPKVTAFVS…QTLIRNNTTM (233 aa)) enclose the Radical SAM core domain. A TRAM domain is found at 379–442 (QKMLGSIQSV…PNSLRGSYEK (64 aa)).

It belongs to the methylthiotransferase family. MiaB subfamily. As to quaternary structure, monomer. [4Fe-4S] cluster is required as a cofactor.

It is found in the cytoplasm. It catalyses the reaction N(6)-dimethylallyladenosine(37) in tRNA + (sulfur carrier)-SH + AH2 + 2 S-adenosyl-L-methionine = 2-methylsulfanyl-N(6)-dimethylallyladenosine(37) in tRNA + (sulfur carrier)-H + 5'-deoxyadenosine + L-methionine + A + S-adenosyl-L-homocysteine + 2 H(+). Catalyzes the methylthiolation of N6-(dimethylallyl)adenosine (i(6)A), leading to the formation of 2-methylthio-N6-(dimethylallyl)adenosine (ms(2)i(6)A) at position 37 in tRNAs that read codons beginning with uridine. The chain is tRNA-2-methylthio-N(6)-dimethylallyladenosine synthase from Buchnera aphidicola subsp. Baizongia pistaciae (strain Bp).